A 283-amino-acid polypeptide reads, in one-letter code: Acetylglutamate kinase (283 aa).

Substrate is bound by residues 64 to 65, Arg-86, and Asn-178; that span reads GG.

This sequence belongs to the acetylglutamate kinase family. ArgB subfamily.

The protein localises to the cytoplasm. It carries out the reaction N-acetyl-L-glutamate + ATP = N-acetyl-L-glutamyl 5-phosphate + ADP. It participates in amino-acid biosynthesis; L-arginine biosynthesis; N(2)-acetyl-L-ornithine from L-glutamate: step 2/4. Catalyzes the ATP-dependent phosphorylation of N-acetyl-L-glutamate. The protein is Acetylglutamate kinase of Lactococcus lactis subsp. lactis (strain IL1403) (Streptococcus lactis).